The chain runs to 171 residues: Co-chaperone protein HscB (171 aa).

The J domain occupies 2-74; that stretch reads DYFTLFGLPA…LTRAEYLLSL (73 aa).

The protein belongs to the HscB family. As to quaternary structure, interacts with HscA and stimulates its ATPase activity. Interacts with IscU.

Co-chaperone involved in the maturation of iron-sulfur cluster-containing proteins. Seems to help targeting proteins to be folded toward HscA. This Salmonella arizonae (strain ATCC BAA-731 / CDC346-86 / RSK2980) protein is Co-chaperone protein HscB.